Reading from the N-terminus, the 211-residue chain is Guanylate kinase (211 aa).

Positions 5 to 184 constitute a Guanylate kinase-like domain; it reads GLLIVFSGPS…AAERVKRIIE (180 aa). 12–19 lines the ATP pocket; that stretch reads GPSGVGKG.

Belongs to the guanylate kinase family.

It localises to the cytoplasm. It catalyses the reaction GMP + ATP = GDP + ADP. In terms of biological role, essential for recycling GMP and indirectly, cGMP. This chain is Guanylate kinase, found in Streptococcus pyogenes serotype M3 (strain SSI-1).